A 101-amino-acid chain; its full sequence is Ubiquitin-related modifier 1 (101 aa).

Residue Gly101 is modified to 1-thioglycine. A Glycyl lysine isopeptide (Gly-Lys) (interchain with K-? in acceptor proteins) cross-link involves residue Gly101.

It belongs to the URM1 family. In terms of processing, C-terminal thiocarboxylation occurs in 2 steps, it is first acyl-adenylated (-COAMP) via the hesA/moeB/thiF part of UBA4, then thiocarboxylated (-COSH) via the rhodanese domain of UBA4.

It is found in the cytoplasm. It participates in tRNA modification; 5-methoxycarbonylmethyl-2-thiouridine-tRNA biosynthesis. In terms of biological role, acts as a sulfur carrier required for 2-thiolation of mcm(5)S(2)U at tRNA wobble positions of cytosolic tRNA(Lys), tRNA(Glu) and tRNA(Gln). Serves as sulfur donor in tRNA 2-thiolation reaction by being thiocarboxylated (-COSH) at its C-terminus by the MOCS3 homolog UBA4. The sulfur is then transferred to tRNA to form 2-thiolation of mcm(5)S(2)U. Prior mcm(5) tRNA modification by the elongator complex is required for 2-thiolation. Also acts as a ubiquitin-like protein (UBL) that is covalently conjugated via an isopeptide bond to lysine residues of target proteins such as AHP1. The thiocarboxylated form serves as substrate for conjugation and oxidative stress specifically induces the formation of UBL-protein conjugates. The chain is Ubiquitin-related modifier 1 from Kluyveromyces lactis (strain ATCC 8585 / CBS 2359 / DSM 70799 / NBRC 1267 / NRRL Y-1140 / WM37) (Yeast).